The chain runs to 415 residues: Phosphoribosylamine--glycine ligase (415 aa).

The ATP-grasp domain maps to 108 to 311; the sequence is KKIMEKYNIP…LMQHIIDLDE (204 aa). 134-191 is an ATP binding site; sequence IENCELPVVVKKDGLAAGKGVIIADTIEAARSAIEIMYGDEEEGTVVFETFLEGEEFS. Residues Glu281 and Asn283 each coordinate Mg(2+).

This sequence belongs to the GARS family. The cofactor is Mg(2+). Requires Mn(2+) as cofactor.

It carries out the reaction 5-phospho-beta-D-ribosylamine + glycine + ATP = N(1)-(5-phospho-beta-D-ribosyl)glycinamide + ADP + phosphate + H(+). The protein operates within purine metabolism; IMP biosynthesis via de novo pathway; N(1)-(5-phospho-D-ribosyl)glycinamide from 5-phospho-alpha-D-ribose 1-diphosphate: step 2/2. The chain is Phosphoribosylamine--glycine ligase from Staphylococcus aureus (strain MW2).